The primary structure comprises 799 residues: Dipeptidyl peptidase family member 1 (799 aa).

The Cytoplasmic segment spans residues 1-31; it reads MTAEADLLEGYDEELGGNESQKRDCKGITTA. A helical; Signal-anchor for type II membrane protein membrane pass occupies residues 32-52; it reads IVVVLLILVMIFAALVFFTPL. Over 53–799 the chain is Lumenal; the sequence is FAAKSFGSWR…FLRQCFYTDK (747 aa). N-linked (GlcNAc...) asparagine glycosylation is found at Asn64, Asn138, Asn267, and Asn335. The cysteines at positions 474 and 477 are disulfide-linked. Asn481 is a glycosylation site (N-linked (GlcNAc...) asparagine). A disulfide bridge links Cys482 with Cys500. The N-linked (GlcNAc...) asparagine glycan is linked to Asn512. Residues Ser669, Asp742, and His774 each act as charge relay system in the active site. A disulfide bond links Cys689 and Cys794.

This sequence belongs to the peptidase S9B family. DPPIV subfamily.

Its subcellular location is the cell membrane. Removes N-terminal dipeptides sequentially from polypeptides. Essential for control of distal tip cell migration. The polypeptide is Dipeptidyl peptidase family member 1 (dpf-1) (Caenorhabditis elegans).